Reading from the N-terminus, the 367-residue chain is tRNA 2-selenouridine synthase (367 aa).

The 124-residue stretch at 14–137 (FLNDVPLMDV…LRRFLIDSLE (124 aa)) folds into the Rhodanese domain. The S-selanylcysteine intermediate role is filled by C97.

This sequence belongs to the SelU family. Monomer.

It carries out the reaction 5-methylaminomethyl-2-thiouridine(34) in tRNA + selenophosphate + (2E)-geranyl diphosphate + H2O + H(+) = 5-methylaminomethyl-2-selenouridine(34) in tRNA + (2E)-thiogeraniol + phosphate + diphosphate. It catalyses the reaction 5-methylaminomethyl-2-thiouridine(34) in tRNA + (2E)-geranyl diphosphate = 5-methylaminomethyl-S-(2E)-geranyl-thiouridine(34) in tRNA + diphosphate. The catalysed reaction is 5-methylaminomethyl-S-(2E)-geranyl-thiouridine(34) in tRNA + selenophosphate + H(+) = 5-methylaminomethyl-2-(Se-phospho)selenouridine(34) in tRNA + (2E)-thiogeraniol. The enzyme catalyses 5-methylaminomethyl-2-(Se-phospho)selenouridine(34) in tRNA + H2O = 5-methylaminomethyl-2-selenouridine(34) in tRNA + phosphate. Involved in the post-transcriptional modification of the uridine at the wobble position (U34) of tRNA(Lys), tRNA(Glu) and tRNA(Gln). Catalyzes the conversion of 2-thiouridine (S2U-RNA) to 2-selenouridine (Se2U-RNA). Acts in a two-step process involving geranylation of 2-thiouridine (S2U) to S-geranyl-2-thiouridine (geS2U) and subsequent selenation of the latter derivative to 2-selenouridine (Se2U) in the tRNA chain. This is tRNA 2-selenouridine synthase from Marinobacter nauticus (strain ATCC 700491 / DSM 11845 / VT8) (Marinobacter aquaeolei).